The sequence spans 374 residues: 2-aminoethylphosphonate--pyruvate transaminase 1 (374 aa).

Residue K195 is modified to N6-(pyridoxal phosphate)lysine.

Belongs to the class-V pyridoxal-phosphate-dependent aminotransferase family. PhnW subfamily. Homodimer. Requires pyridoxal 5'-phosphate as cofactor.

The catalysed reaction is (2-aminoethyl)phosphonate + pyruvate = phosphonoacetaldehyde + L-alanine. Its function is as follows. Involved in phosphonate degradation. The sequence is that of 2-aminoethylphosphonate--pyruvate transaminase 1 from Polaromonas sp. (strain JS666 / ATCC BAA-500).